The following is a 350-amino-acid chain: Arabinogalactan endo-beta-1,4-galactanase (350 aa).

Positions 1 to 16 (MFASLLLAALPLLTHA) are cleaved as a signal peptide. A glycan (N-linked (GlcNAc...) asparagine) is linked at asparagine 128. Glutamate 152 (proton donor) is an active-site residue. Glutamate 262 (nucleophile) is an active-site residue.

Belongs to the glycosyl hydrolase 53 family. Post-translationally, glycosylated.

It catalyses the reaction The enzyme specifically hydrolyzes (1-&gt;4)-beta-D-galactosidic linkages in type I arabinogalactans.. The chain is Arabinogalactan endo-beta-1,4-galactanase (gal1) from Aspergillus aculeatus.